Consider the following 594-residue polypeptide: Lysine--tRNA ligase cla4 (594 aa).

The segment at 1–62 (MADPGAVKET…KETSSEQDEA (62 aa)) is disordered. The segment covering 18-42 (TGEKVSKTELKKRLKSRAKEAEKQK) has biased composition (basic and acidic residues).

Belongs to the class-II aminoacyl-tRNA synthetase family. Homodimer.

The catalysed reaction is tRNA(Lys) + L-lysine + ATP = L-lysyl-tRNA(Lys) + AMP + diphosphate. In terms of biological role, involved in self-resistance to cladosporin since this product is an inhibitor of lysyl-tRNA synthetase. Cla4 may not be inhibited by cladosporin, thereby imparting cladosporin resistance. When cladosporin biosynthesis is switched on, transcription of cla4 will then be necessary for continued protein synthesis in C.cladosporioides. This Cladosporium cladosporioides protein is Lysine--tRNA ligase cla4.